We begin with the raw amino-acid sequence, 476 residues long: Ribosomal RNA small subunit methyltransferase F (476 aa).

S-adenosyl-L-methionine contacts are provided by residues 125–131 (AAAPGSK), E149, D176, and D194. C247 (nucleophile) is an active-site residue.

This sequence belongs to the class I-like SAM-binding methyltransferase superfamily. RsmB/NOP family.

The protein localises to the cytoplasm. It catalyses the reaction cytidine(1407) in 16S rRNA + S-adenosyl-L-methionine = 5-methylcytidine(1407) in 16S rRNA + S-adenosyl-L-homocysteine + H(+). Its function is as follows. Specifically methylates the cytosine at position 1407 (m5C1407) of 16S rRNA. The protein is Ribosomal RNA small subunit methyltransferase F of Aeromonas salmonicida (strain A449).